The following is a 353-amino-acid chain: Photosystem II protein D1 (353 aa).

Thr2 carries the N-acetylthreonine modification. Phosphothreonine is present on Thr2. The next 3 membrane-spanning stretches (helical) occupy residues 29–46, 118–133, and 142–156; these read YIGWFGVLMIPTLLTATS, HFLLGVACYMGREWEL, and WIAVAYSAPVAAAAA. His118 is a chlorophyll a binding site. Tyr126 contributes to the pheophytin a binding site. 2 residues coordinate [CaMn4O5] cluster: Asp170 and Glu189. Residues 197 to 218 traverse the membrane as a helical segment; the sequence is FHMLGVAGVFGGSLFSAMHGSL. His198 is a binding site for chlorophyll a. Residues His215 and 264 to 265 contribute to the a quinone site; that span reads SF. Residue His215 participates in Fe cation binding. Residue His272 coordinates Fe cation. The helical transmembrane segment at 274 to 288 threads the bilayer; sequence FLAAWPVVGIWFTAL. 4 residues coordinate [CaMn4O5] cluster: His332, Glu333, Asp342, and Ala344. Residues 345-353 constitute a propeptide that is removed on maturation; sequence AVEAPSTNG.

It belongs to the reaction center PufL/M/PsbA/D family. As to quaternary structure, PSII is composed of 1 copy each of membrane proteins PsbA, PsbB, PsbC, PsbD, PsbE, PsbF, PsbH, PsbI, PsbJ, PsbK, PsbL, PsbM, PsbT, PsbX, PsbY, PsbZ, Psb30/Ycf12, at least 3 peripheral proteins of the oxygen-evolving complex and a large number of cofactors. It forms dimeric complexes. It depends on The D1/D2 heterodimer binds P680, chlorophylls that are the primary electron donor of PSII, and subsequent electron acceptors. It shares a non-heme iron and each subunit binds pheophytin, quinone, additional chlorophylls, carotenoids and lipids. D1 provides most of the ligands for the Mn4-Ca-O5 cluster of the oxygen-evolving complex (OEC). There is also a Cl(-1) ion associated with D1 and D2, which is required for oxygen evolution. The PSII complex binds additional chlorophylls, carotenoids and specific lipids. as a cofactor. Tyr-161 forms a radical intermediate that is referred to as redox-active TyrZ, YZ or Y-Z. Post-translationally, C-terminally processed by CTPA; processing is essential to allow assembly of the oxygen-evolving complex and thus photosynthetic growth.

The protein localises to the plastid. It localises to the chloroplast thylakoid membrane. It carries out the reaction 2 a plastoquinone + 4 hnu + 2 H2O = 2 a plastoquinol + O2. In terms of biological role, photosystem II (PSII) is a light-driven water:plastoquinone oxidoreductase that uses light energy to abstract electrons from H(2)O, generating O(2) and a proton gradient subsequently used for ATP formation. It consists of a core antenna complex that captures photons, and an electron transfer chain that converts photonic excitation into a charge separation. The D1/D2 (PsbA/PsbD) reaction center heterodimer binds P680, the primary electron donor of PSII as well as several subsequent electron acceptors. This chain is Photosystem II protein D1, found in Nandina domestica (Heavenly bamboo).